A 513-amino-acid chain; its full sequence is ATP synthase subunit alpha (513 aa).

171–178 (GDRQIGKT) serves as a coordination point for ATP.

Belongs to the ATPase alpha/beta chains family. In terms of assembly, F-type ATPases have 2 components, CF(1) - the catalytic core - and CF(0) - the membrane proton channel. CF(1) has five subunits: alpha(3), beta(3), gamma(1), delta(1), epsilon(1). CF(0) has three main subunits: a(1), b(2) and c(9-12). The alpha and beta chains form an alternating ring which encloses part of the gamma chain. CF(1) is attached to CF(0) by a central stalk formed by the gamma and epsilon chains, while a peripheral stalk is formed by the delta and b chains.

Its subcellular location is the cell membrane. The catalysed reaction is ATP + H2O + 4 H(+)(in) = ADP + phosphate + 5 H(+)(out). Functionally, produces ATP from ADP in the presence of a proton gradient across the membrane. The alpha chain is a regulatory subunit. The polypeptide is ATP synthase subunit alpha (Wolbachia pipientis wMel).